Here is a 206-residue protein sequence, read N- to C-terminus: GTP cyclohydrolase 1 (206 aa).

Positions 98, 101, and 169 each coordinate Zn(2+).

The protein belongs to the GTP cyclohydrolase I family. As to quaternary structure, toroid-shaped homodecamer, composed of two pentamers of five dimers.

The enzyme catalyses GTP + H2O = 7,8-dihydroneopterin 3'-triphosphate + formate + H(+). The protein operates within cofactor biosynthesis; 7,8-dihydroneopterin triphosphate biosynthesis; 7,8-dihydroneopterin triphosphate from GTP: step 1/1. The chain is GTP cyclohydrolase 1 from Helicobacter hepaticus (strain ATCC 51449 / 3B1).